The following is a 379-amino-acid chain: 4-hydroxy-3-methylbut-2-enyl diphosphate reductase (379 aa).

Residue Cys39 participates in [4Fe-4S] cluster binding. His69 provides a ligand contact to (2E)-4-hydroxy-3-methylbut-2-enyl diphosphate. His69 serves as a coordination point for dimethylallyl diphosphate. His69 lines the isopentenyl diphosphate pocket. A [4Fe-4S] cluster-binding site is contributed by Cys130. His158 contributes to the (2E)-4-hydroxy-3-methylbut-2-enyl diphosphate binding site. Residue His158 coordinates dimethylallyl diphosphate. Isopentenyl diphosphate is bound at residue His158. Catalysis depends on Glu160, which acts as the Proton donor. Thr223 contributes to the (2E)-4-hydroxy-3-methylbut-2-enyl diphosphate binding site. Position 261 (Cys261) interacts with [4Fe-4S] cluster. (2E)-4-hydroxy-3-methylbut-2-enyl diphosphate is bound by residues Ser290, Ser291, Asn292, and Ser352. 4 residues coordinate dimethylallyl diphosphate: Ser290, Ser291, Asn292, and Ser352. Ser290, Ser291, Asn292, and Ser352 together coordinate isopentenyl diphosphate.

The protein belongs to the IspH family. [4Fe-4S] cluster is required as a cofactor.

The catalysed reaction is isopentenyl diphosphate + 2 oxidized [2Fe-2S]-[ferredoxin] + H2O = (2E)-4-hydroxy-3-methylbut-2-enyl diphosphate + 2 reduced [2Fe-2S]-[ferredoxin] + 2 H(+). It catalyses the reaction dimethylallyl diphosphate + 2 oxidized [2Fe-2S]-[ferredoxin] + H2O = (2E)-4-hydroxy-3-methylbut-2-enyl diphosphate + 2 reduced [2Fe-2S]-[ferredoxin] + 2 H(+). Its pathway is isoprenoid biosynthesis; dimethylallyl diphosphate biosynthesis; dimethylallyl diphosphate from (2E)-4-hydroxy-3-methylbutenyl diphosphate: step 1/1. The protein operates within isoprenoid biosynthesis; isopentenyl diphosphate biosynthesis via DXP pathway; isopentenyl diphosphate from 1-deoxy-D-xylulose 5-phosphate: step 6/6. Catalyzes the conversion of 1-hydroxy-2-methyl-2-(E)-butenyl 4-diphosphate (HMBPP) into a mixture of isopentenyl diphosphate (IPP) and dimethylallyl diphosphate (DMAPP). Acts in the terminal step of the DOXP/MEP pathway for isoprenoid precursor biosynthesis. The protein is 4-hydroxy-3-methylbut-2-enyl diphosphate reductase of Synechocystis sp. (strain ATCC 27184 / PCC 6803 / Kazusa).